The following is a 245-amino-acid chain: tRNA (guanine-N(1)-)-methyltransferase (245 aa).

Residues G114 and 133-138 (LGDFVI) each bind S-adenosyl-L-methionine.

This sequence belongs to the RNA methyltransferase TrmD family. In terms of assembly, homodimer.

It is found in the cytoplasm. The catalysed reaction is guanosine(37) in tRNA + S-adenosyl-L-methionine = N(1)-methylguanosine(37) in tRNA + S-adenosyl-L-homocysteine + H(+). In terms of biological role, specifically methylates guanosine-37 in various tRNAs. This is tRNA (guanine-N(1)-)-methyltransferase from Pediococcus pentosaceus (strain ATCC 25745 / CCUG 21536 / LMG 10740 / 183-1w).